The primary structure comprises 905 residues: NADH-quinone oxidoreductase subunit G (905 aa).

Residues 1 to 83 (MATIHVDGKT…NTWISIEDEE (83 aa)) enclose the 2Fe-2S ferredoxin-type domain. [2Fe-2S] cluster contacts are provided by C34, C45, C48, and C67. Residues 83–122 (EAKQFRASVVEWLMTNHPHDCPVCEEGGHCHLQDMTVMTG) form the 4Fe-4S His(Cys)3-ligated-type domain. The [4Fe-4S] cluster site is built by H99, C103, C106, C112, C151, C154, C157, C201, C228, C231, C235, and C263. The 4Fe-4S Mo/W bis-MGD-type domain occupies 221 to 277 (MQFAPSICHGCSSGCNISPGERYGEIRRIENRYNGSVNHYFLCDRGRFGYGYVNRED).

The protein belongs to the complex I 75 kDa subunit family. Composed of 13 different subunits. Subunits NuoCD, E, F, and G constitute the peripheral sector of the complex. [2Fe-2S] cluster serves as cofactor. Requires [4Fe-4S] cluster as cofactor.

The catalysed reaction is a quinone + NADH + 5 H(+)(in) = a quinol + NAD(+) + 4 H(+)(out). Its function is as follows. NDH-1 shuttles electrons from NADH, via FMN and iron-sulfur (Fe-S) centers, to quinones in the respiratory chain. The immediate electron acceptor for the enzyme in this species is believed to be ubiquinone. Couples the redox reaction to proton translocation (for every two electrons transferred, four hydrogen ions are translocated across the cytoplasmic membrane), and thus conserves the redox energy in a proton gradient. This chain is NADH-quinone oxidoreductase subunit G (nuoG), found in Pseudomonas aeruginosa (strain ATCC 15692 / DSM 22644 / CIP 104116 / JCM 14847 / LMG 12228 / 1C / PRS 101 / PAO1).